We begin with the raw amino-acid sequence, 563 residues long: Methylcrotonoyl-CoA carboxylase beta chain, mitochondrial (563 aa).

The transit peptide at methionine 1 to alanine 22 directs the protein to the mitochondrion. Residues methionine 49–proline 306 form the CoA carboxyltransferase N-terminal domain. The tract at residues methionine 49–arginine 555 is carboxyltransferase. Lysine 70 carries the post-translational modification N6-acetyllysine; alternate. Position 70 is an N6-succinyllysine; alternate (lysine 70). Lysine 141 carries the post-translational modification N6-succinyllysine. The 247-residue stretch at glutamate 309 to arginine 555 folds into the CoA carboxyltransferase C-terminal domain. Positions arginine 343–asparagine 372 are acyl-CoA binding. Lysine 433 carries the N6-succinyllysine modification. At lysine 495 the chain carries N6-acetyllysine; alternate. At lysine 495 the chain carries N6-succinyllysine; alternate. Lysine 511 is subject to N6-acetyllysine.

The protein belongs to the AccD/PCCB family. As to quaternary structure, probably a dodecamer composed of six biotin-containing alpha subunits (MCCC1) and six beta (MCCC2) subunits.

Its subcellular location is the mitochondrion matrix. It catalyses the reaction 3-methylbut-2-enoyl-CoA + hydrogencarbonate + ATP = 3-methyl-(2E)-glutaconyl-CoA + ADP + phosphate + H(+). The protein operates within amino-acid degradation; L-leucine degradation; (S)-3-hydroxy-3-methylglutaryl-CoA from 3-isovaleryl-CoA: step 2/3. Its function is as follows. Carboxyltransferase subunit of the 3-methylcrotonyl-CoA carboxylase, an enzyme that catalyzes the conversion of 3-methylcrotonyl-CoA to 3-methylglutaconyl-CoA, a critical step for leucine and isovaleric acid catabolism. The chain is Methylcrotonoyl-CoA carboxylase beta chain, mitochondrial (Mccc2) from Mus musculus (Mouse).